Here is a 1070-residue protein sequence, read N- to C-terminus: Inactive tyrosine-protein kinase 7 (1070 aa).

The N-terminal stretch at 1–30 (MGAARGSPARPRRLPLLSVLLLPLLGGTQT) is a signal peptide. Ig-like C2-type domains lie at 31–120 (AIVF…ASFN), 128–218 (PVVL…FTLS), 225–317 (ARVV…EATL), 309–407 (PPII…VNIT), 412–497 (PSWL…ARVQ), 503–586 (KFTP…HVQL), and 578–680 (GQIR…APLY). Residues 31–704 (AIVFIKQPSS…SPPPYKMIQT (674 aa)) are Extracellular-facing. Cys53 and Cys101 form a disulfide bridge. N-linked (GlcNAc...) asparagine glycosylation is found at Asn116, Asn175, Asn184, Asn214, Asn268, and Asn283. Cys150 and Cys200 are oxidised to a cystine. 2 cysteine pairs are disulfide-bonded: Cys246/Cys301 and Cys343/Cys391. N-linked (GlcNAc...) asparagine glycans are attached at residues Asn405, Asn463, Asn567, and Asn646. Disulfide bonds link Cys433/Cys481, Cys524/Cys570, and Cys613/Cys664. The chain crosses the membrane as a helical span at residues 705–725 (IGLSVGAAVAYIIAVLGLMFY). The Cytoplasmic segment spans residues 726–1070 (CKKRCKAKRL…LGDSTVDSKP (345 aa)). Disordered regions lie at residues 736–759 (QKQP…NGQP) and 773–793 (GSGP…HFPR). An interaction with CTNNB1 region spans residues 794-1070 (SSLQPITTLG…LGDSTVDSKP (277 aa)). In terms of domain architecture, Protein kinase; inactive spans 796 to 1066 (LQPITTLGKS…IASALGDSTV (271 aa)). Ser1064 is modified (phosphoserine).

Belongs to the protein kinase superfamily. Tyr protein kinase family. Insulin receptor subfamily. In terms of assembly, interacts with CTNNB1. In terms of processing, MMP14 cleaves PTK7 between Pro-621 and Leu-622 generating an N-terminal soluble (70 kDa) fragment and a membrane C-terminal (50 kDa) fragment. Proteolysis by MMP14 regulates PTK7 function in non-canonical Wnt signaling pathway. As to expression, highly expressed in lung, liver, pancreas, kidney, placenta and melanocytes. Weakly expressed in thyroid gland, ovary, brain, heart and skeletal muscle. Also expressed in erythroleukemia cells. But not expressed in colon.

It localises to the membrane. It is found in the cell junction. In terms of biological role, inactive tyrosine kinase involved in Wnt signaling pathway. Component of both the non-canonical (also known as the Wnt/planar cell polarity signaling) and the canonical Wnt signaling pathway. Functions in cell adhesion, cell migration, cell polarity, proliferation, actin cytoskeleton reorganization and apoptosis. Has a role in embryogenesis, epithelial tissue organization and angiogenesis. The sequence is that of Inactive tyrosine-protein kinase 7 (PTK7) from Homo sapiens (Human).